The sequence spans 116 residues: Transcriptional regulator WhiB4 (116 aa).

Residues 36-92 (LCRATDPDELFVRGAAQRKAAVICRHCPVMQECGADALDNKVEFGVWGGMTERQRRA) enclose the 4Fe-4S Wbl-type domain. C37, C59, C62, and C68 together coordinate [4Fe-4S] cluster.

The protein belongs to the WhiB family. Requires [4Fe-4S] cluster as cofactor. In terms of processing, the Fe-S cluster can be nitrosylated by nitric oxide (NO). Post-translationally, upon Fe-S cluster removal intramolecular disulfide bonds are formed.

Its subcellular location is the cytoplasm. Acts as a transcriptional regulator. Probably redox-responsive. The apo- but not holo-form probably binds DNA. Plays a role in lipooligosaccharide (LOS) biosynthesis by regulating LOS gene expression. The protein is Transcriptional regulator WhiB4 (whiB4) of Mycobacterium marinum (strain ATCC BAA-535 / M).